A 490-amino-acid polypeptide reads, in one-letter code: Chromosomal replication initiator protein DnaA (490 aa).

Residues 1–91 (MTMKGGVASQ…GELWAAHDAT (91 aa)) are domain I, interacts with DnaA modulators. A domain II region spans residues 91-147 (TGRRIDLKSRLEFEAAAGAYVEATPKAVAAEPIEIVLPVSTDAPTVVAPSAKSPRTQ). The tract at residues 148 to 370 (GLQERFTFET…GALNTLSARA (223 aa)) is domain III, AAA+ region. ATP-binding residues include Gly192, Gly194, Lys195, and Thr196. A domain IV, binds dsDNA region spans residues 371-490 (GEGLSRMTLD…LETLTRKLRG (120 aa)).

It belongs to the DnaA family. As to quaternary structure, oligomerizes as a right-handed, spiral filament on DNA at oriC.

The protein resides in the cytoplasm. Its function is as follows. Plays an essential role in the initiation and regulation of chromosomal replication. ATP-DnaA binds to the origin of replication (oriC) to initiate formation of the DNA replication initiation complex once per cell cycle. Binds the DnaA box (a 9 base pair repeat at the origin) and separates the double-stranded (ds)DNA. Forms a right-handed helical filament on oriC DNA; dsDNA binds to the exterior of the filament while single-stranded (ss)DNA is stabiized in the filament's interior. The ATP-DnaA-oriC complex binds and stabilizes one strand of the AT-rich DNA unwinding element (DUE), permitting loading of DNA polymerase. After initiation quickly degrades to an ADP-DnaA complex that is not apt for DNA replication. Binds acidic phospholipids. The chain is Chromosomal replication initiator protein DnaA from Caulobacter vibrioides (strain ATCC 19089 / CIP 103742 / CB 15) (Caulobacter crescentus).